A 79-amino-acid chain; its full sequence is UPF0154 protein llmg_1186 (79 aa).

A helical transmembrane segment spans residues 4–24 (ILAILLMVVCLLAGFFLGTWF).

This sequence belongs to the UPF0154 family.

The protein localises to the cell membrane. In Lactococcus lactis subsp. cremoris (strain MG1363), this protein is UPF0154 protein llmg_1186.